Here is a 198-residue protein sequence, read N- to C-terminus: A-type ATP synthase subunit E (198 aa).

This sequence belongs to the V-ATPase E subunit family. In terms of assembly, has multiple subunits with at least A(3), B(3), C, D, E, F, H, I and proteolipid K(x).

The protein resides in the cell membrane. Component of the A-type ATP synthase that produces ATP from ADP in the presence of a proton gradient across the membrane. This Pyrococcus furiosus (strain ATCC 43587 / DSM 3638 / JCM 8422 / Vc1) protein is A-type ATP synthase subunit E.